The primary structure comprises 120 residues: Ribosome-binding factor A (120 aa).

The protein belongs to the RbfA family. Monomer. Binds 30S ribosomal subunits, but not 50S ribosomal subunits or 70S ribosomes.

The protein localises to the cytoplasm. Its function is as follows. One of several proteins that assist in the late maturation steps of the functional core of the 30S ribosomal subunit. Associates with free 30S ribosomal subunits (but not with 30S subunits that are part of 70S ribosomes or polysomes). Required for efficient processing of 16S rRNA. May interact with the 5'-terminal helix region of 16S rRNA. In Borrelia garinii subsp. bavariensis (strain ATCC BAA-2496 / DSM 23469 / PBi) (Borreliella bavariensis), this protein is Ribosome-binding factor A.